Here is an 801-residue protein sequence, read N- to C-terminus: Lon protease 2 (801 aa).

Residues 14-209 (LPMLPVRDIV…LVNEILAAEL (196 aa)) form the Lon N-terminal domain. 361–368 (GPPGVGKT) lines the ATP pocket. Positions 597-778 (DSQVGVVQGL…DEVFAVAFDK (182 aa)) constitute a Lon proteolytic domain. Catalysis depends on residues Ser684 and Lys727. The segment covering 780–791 (AKGQEKKPAAKK) has biased composition (basic and acidic residues). The disordered stretch occupies residues 780 to 801 (AKGQEKKPAAKKDPKKTKSLAA). The span at 792-801 (DPKKTKSLAA) shows a compositional bias: basic residues.

The protein belongs to the peptidase S16 family. In terms of assembly, homohexamer. Organized in a ring with a central cavity.

The protein resides in the cytoplasm. The catalysed reaction is Hydrolysis of proteins in presence of ATP.. ATP-dependent serine protease that mediates the selective degradation of mutant and abnormal proteins as well as certain short-lived regulatory proteins. Required for cellular homeostasis and for survival from DNA damage and developmental changes induced by stress. Degrades polypeptides processively to yield small peptide fragments that are 5 to 10 amino acids long. Binds to DNA in a double-stranded, site-specific manner. The sequence is that of Lon protease 2 from Bdellovibrio bacteriovorus (strain ATCC 15356 / DSM 50701 / NCIMB 9529 / HD100).